Consider the following 953-residue polypeptide: 26S proteasome non-ATPase regulatory subunit 1 (953 aa).

N-acetylmethionine is present on M1. T273 is modified (phosphothreonine). A disordered region spans residues S277–K319. A compositionally biased stretch (basic and acidic residues) spans P290–T303. K310 is modified (N6-acetyllysine). T311 is modified (phosphothreonine). At S315 the chain carries Phosphoserine. PC repeat units lie at residues T403–A436, G441–R474, G476–E510, A511–L545, G547–R580, S581–R616, A617–R649, G651–Q685, G686–A726, and G729–V761. An N6-acetyllysine modification is found at K720. T830 carries the phosphothreonine modification. S834 is modified (phosphoserine). Disordered regions lie at residues A839–P881 and A930–D953. 2 stretches are compositionally biased toward basic and acidic residues: residues K842–E852 and A859–E872. Residues E936–D953 show a composition bias toward acidic residues.

It belongs to the proteasome subunit S1 family. As to quaternary structure, component of the 19S proteasome regulatory particle complex. The 26S proteasome consists of a 20S core particle (CP) and two 19S regulatory subunits (RP). The regulatory particle is made of a lid composed of 9 subunits, a base containing 6 ATPases and few additional components including PSMD1. Interacts with ADRM1. Interacts with ZFAND1.

In terms of biological role, component of the 26S proteasome, a multiprotein complex involved in the ATP-dependent degradation of ubiquitinated proteins. This complex plays a key role in the maintenance of protein homeostasis by removing misfolded or damaged proteins, which could impair cellular functions, and by removing proteins whose functions are no longer required. Therefore, the proteasome participates in numerous cellular processes, including cell cycle progression, apoptosis, or DNA damage repair. This Rattus norvegicus (Rat) protein is 26S proteasome non-ATPase regulatory subunit 1 (Psmd1).